The sequence spans 380 residues: Adaptive-response sensory kinase SasA (380 aa).

The segment at 20 to 101 is kaiB-like domain, interacts with KaiC; it reads LLFVANRPGD…QKVDYWWPRW (82 aa). Residues 157–380 form the Histidine kinase domain; sequence LLAHELRNPL…CFHFTLPVYS (224 aa). His-160 is modified (phosphohistidine; by autocatalysis).

As to quaternary structure, homotrimer with a small amount of possible homohexamer; a protein fragment of 109-380 is also a homotrimer. Interacts with KaiC, probably as 1 SasA trimer:1 KaiC homohexamer; unphosphorylated SasA has the highest affinity. Homodimer. Binds to the B-loop in the CI domain of KaiC; SasA and KaiB(fs) compete to bind to the CI domain. Binds preferentially to doubly phosphorylated KaiC. Autophosphorylates, probably on His-160.

It carries out the reaction ATP + protein L-histidine = ADP + protein N-phospho-L-histidine.. Member of the two-component regulatory system SasA/RpaA involved in genome-wide circadian gene expression. One of several clock output pathways. Participates in the Kai clock protein complex, the main circadian regulator in cyanobacteria, via its interaction with KaiC. KaiC enhances the autophosphorylation activity of SasA, which then transfers its phosphate group to RpaA to activate it. In addition to its output function, recruits fold-shifted KaiB (KaiB(fs)) to KaiC to cooperatively form the KaiB(6):KaiC(6) complex (independent of SasA kinase activity). Required for robustness of the circadian rhythm of gene expression and is involved in clock output, also required for adaptation to light/dark cycles. The protein is Adaptive-response sensory kinase SasA of Thermosynechococcus vestitus (strain NIES-2133 / IAM M-273 / BP-1).